We begin with the raw amino-acid sequence, 1394 residues long: DNA-directed RNA polymerase subunit beta' (1394 aa).

4 residues coordinate Zn(2+): Cys-70, Cys-72, Cys-85, and Cys-88. The Mg(2+) site is built by Asp-470, Asp-472, and Asp-474. Zn(2+)-binding residues include Cys-815, Cys-889, Cys-896, and Cys-899.

The protein belongs to the RNA polymerase beta' chain family. The RNAP catalytic core consists of 2 alpha, 1 beta, 1 beta' and 1 omega subunit. When a sigma factor is associated with the core the holoenzyme is formed, which can initiate transcription. It depends on Mg(2+) as a cofactor. Requires Zn(2+) as cofactor.

It carries out the reaction RNA(n) + a ribonucleoside 5'-triphosphate = RNA(n+1) + diphosphate. DNA-dependent RNA polymerase catalyzes the transcription of DNA into RNA using the four ribonucleoside triphosphates as substrates. The protein is DNA-directed RNA polymerase subunit beta' of Anaeromyxobacter sp. (strain K).